Reading from the N-terminus, the 564-residue chain is Dihydroxy-acid dehydratase (564 aa).

Cysteine 53 serves as a coordination point for [2Fe-2S] cluster. A Mg(2+)-binding site is contributed by aspartate 85. Cysteine 126 is a [2Fe-2S] cluster binding site. Residues aspartate 127 and lysine 128 each coordinate Mg(2+). Lysine 128 carries the post-translational modification N6-carboxylysine. A [2Fe-2S] cluster-binding site is contributed by cysteine 203. Position 454 (glutamate 454) interacts with Mg(2+). Residue serine 480 is the Proton acceptor of the active site.

The protein belongs to the IlvD/Edd family. Homodimer. [2Fe-2S] cluster serves as cofactor. The cofactor is Mg(2+).

It catalyses the reaction (2R)-2,3-dihydroxy-3-methylbutanoate = 3-methyl-2-oxobutanoate + H2O. The enzyme catalyses (2R,3R)-2,3-dihydroxy-3-methylpentanoate = (S)-3-methyl-2-oxopentanoate + H2O. Its pathway is amino-acid biosynthesis; L-isoleucine biosynthesis; L-isoleucine from 2-oxobutanoate: step 3/4. The protein operates within amino-acid biosynthesis; L-valine biosynthesis; L-valine from pyruvate: step 3/4. In terms of biological role, functions in the biosynthesis of branched-chain amino acids. Catalyzes the dehydration of (2R,3R)-2,3-dihydroxy-3-methylpentanoate (2,3-dihydroxy-3-methylvalerate) into 2-oxo-3-methylpentanoate (2-oxo-3-methylvalerate) and of (2R)-2,3-dihydroxy-3-methylbutanoate (2,3-dihydroxyisovalerate) into 2-oxo-3-methylbutanoate (2-oxoisovalerate), the penultimate precursor to L-isoleucine and L-valine, respectively. This is Dihydroxy-acid dehydratase from Leifsonia xyli subsp. xyli (strain CTCB07).